A 531-amino-acid polypeptide reads, in one-letter code: Polygalacturonase (531 aa).

An N-terminal signal peptide occupies residues methionine 1–alanine 23. The Proton donor role is filled by aspartate 307. Residue histidine 333 is part of the active site. The interval alanine 518–isoleucine 531 is required for PGA export across the outer membrane and catalytic activity.

This sequence belongs to the glycosyl hydrolase 28 family. In terms of assembly, monomer.

The protein resides in the secreted. It catalyses the reaction (1,4-alpha-D-galacturonosyl)n+m + H2O = (1,4-alpha-D-galacturonosyl)n + (1,4-alpha-D-galacturonosyl)m.. In terms of biological role, contributes to the wilt disease production on tomato. This chain is Polygalacturonase (pglA), found in Ralstonia nicotianae (strain ATCC BAA-1114 / GMI1000) (Ralstonia solanacearum).